The primary structure comprises 89 residues: Small ribosomal subunit protein uS15 (89 aa).

The span at 1–16 (MSVADIKKQDIVKDNG) shows a compositional bias: basic and acidic residues. The tract at residues 1-24 (MSVADIKKQDIVKDNGRSANDTGS) is disordered.

This sequence belongs to the universal ribosomal protein uS15 family. Part of the 30S ribosomal subunit. Forms a bridge to the 50S subunit in the 70S ribosome, contacting the 23S rRNA.

In terms of biological role, one of the primary rRNA binding proteins, it binds directly to 16S rRNA where it helps nucleate assembly of the platform of the 30S subunit by binding and bridging several RNA helices of the 16S rRNA. Forms an intersubunit bridge (bridge B4) with the 23S rRNA of the 50S subunit in the ribosome. The sequence is that of Small ribosomal subunit protein uS15 from Ralstonia pickettii (strain 12J).